The primary structure comprises 526 residues: Peptide chain release factor 3 (526 aa).

The region spanning 9 to 277 (DKRRTFAIIS…GIVEWAPKPL (269 aa)) is the tr-type G domain. Residues 18–25 (SHPDAGKT), 86–90 (DTPGH), and 140–143 (NKLD) contribute to the GTP site.

The protein belongs to the TRAFAC class translation factor GTPase superfamily. Classic translation factor GTPase family. PrfC subfamily.

Its subcellular location is the cytoplasm. Increases the formation of ribosomal termination complexes and stimulates activities of RF-1 and RF-2. It binds guanine nucleotides and has strong preference for UGA stop codons. It may interact directly with the ribosome. The stimulation of RF-1 and RF-2 is significantly reduced by GTP and GDP, but not by GMP. The polypeptide is Peptide chain release factor 3 (Shewanella sp. (strain ANA-3)).